We begin with the raw amino-acid sequence, 165 residues long: Small ribosomal subunit protein uS5 (165 aa).

Positions 10-73 (QIEKLISLNR…TSARKNLRFV (64 aa)) constitute an S5 DRBM domain.

It belongs to the universal ribosomal protein uS5 family. Part of the 30S ribosomal subunit. Contacts proteins S4 and S8.

Its function is as follows. With S4 and S12 plays an important role in translational accuracy. In terms of biological role, located at the back of the 30S subunit body where it stabilizes the conformation of the head with respect to the body. This is Small ribosomal subunit protein uS5 from Borreliella afzelii (strain PKo) (Borrelia afzelii).